The following is a 290-amino-acid chain: Cbb3-type cytochrome c oxidase subunit FixP (290 aa).

Residues Trp33–Pro53 form a helical membrane-spanning segment. 2 Cytochrome c domains span residues Leu109–Ser198 and Tyr206–Gly287. The heme c site is built by Cys122, Cys125, His126, Met173, Cys219, Cys222, His223, and Met264.

It belongs to the CcoP / FixP family. In terms of assembly, component of the cbb3-type cytochrome c oxidase at least composed of FixN, FixO, FixQ and FixP. Heme c is required as a cofactor.

It localises to the cell inner membrane. Its pathway is energy metabolism; oxidative phosphorylation. Functionally, C-type cytochrome. Part of the cbb3-type cytochrome c oxidase complex. FixP subunit is required for transferring electrons from donor cytochrome c via its heme groups to FixO subunit. From there, electrons are shuttled to the catalytic binuclear center of FixN subunit where oxygen reduction takes place. The complex also functions as a proton pump. The chain is Cbb3-type cytochrome c oxidase subunit FixP from Bradyrhizobium sp. (strain ORS 278).